A 286-amino-acid polypeptide reads, in one-letter code: Bifunctional protein FolD (286 aa).

NADP(+)-binding positions include 165-167 (GRS) and Ser-190.

Belongs to the tetrahydrofolate dehydrogenase/cyclohydrolase family. As to quaternary structure, homodimer.

It catalyses the reaction (6R)-5,10-methylene-5,6,7,8-tetrahydrofolate + NADP(+) = (6R)-5,10-methenyltetrahydrofolate + NADPH. The catalysed reaction is (6R)-5,10-methenyltetrahydrofolate + H2O = (6R)-10-formyltetrahydrofolate + H(+). The protein operates within one-carbon metabolism; tetrahydrofolate interconversion. In terms of biological role, catalyzes the oxidation of 5,10-methylenetetrahydrofolate to 5,10-methenyltetrahydrofolate and then the hydrolysis of 5,10-methenyltetrahydrofolate to 10-formyltetrahydrofolate. The sequence is that of Bifunctional protein FolD from Burkholderia lata (strain ATCC 17760 / DSM 23089 / LMG 22485 / NCIMB 9086 / R18194 / 383).